Here is a 122-residue protein sequence, read N- to C-terminus: U19-hexatoxin-Hi1a (122 aa).

The signal sequence occupies residues 1-18 (MNTMIGFIVLLVSATVLG). Residues 19–80 (DPELDALRKE…YENSNFREKR (62 aa)) constitute a propeptide that is removed on maturation. Disulfide bonds link C81–C96, C88–C101, and C95–C116.

Expressed by the venom gland.

The protein resides in the secreted. Probable ion channel inhibitor. In Hadronyche infensa (Fraser island funnel-web spider), this protein is U19-hexatoxin-Hi1a.